Reading from the N-terminus, the 181-residue chain is Putative manganese efflux pump MntP (181 aa).

A run of 6 helical transmembrane segments spans residues 5-25 (LIALLIMASALGMDAFSIALG), 36-56 (MFKVGLTIGVFHVIMPLMGMV), 66-86 (GLFANWLGAGLLLWLGLVMIV), 102-122 (IGLFVFALSVSLDSLSAGLSL), 130-150 (ALAVVAMGVMSTVLSWLGLFI), and 158-178 (VGPYSELLGGFILCGFGVKLL).

It belongs to the MntP (TC 9.B.29) family.

It localises to the cell membrane. Its function is as follows. Probably functions as a manganese efflux pump. This Halalkalibacterium halodurans (strain ATCC BAA-125 / DSM 18197 / FERM 7344 / JCM 9153 / C-125) (Bacillus halodurans) protein is Putative manganese efflux pump MntP.